The sequence spans 428 residues: tRNA(Ile)-lysidine synthase (428 aa).

Position 28 to 33 (28 to 33 (SGGVDS)) interacts with ATP.

Belongs to the tRNA(Ile)-lysidine synthase family.

It localises to the cytoplasm. It catalyses the reaction cytidine(34) in tRNA(Ile2) + L-lysine + ATP = lysidine(34) in tRNA(Ile2) + AMP + diphosphate + H(+). Functionally, ligates lysine onto the cytidine present at position 34 of the AUA codon-specific tRNA(Ile) that contains the anticodon CAU, in an ATP-dependent manner. Cytidine is converted to lysidine, thus changing the amino acid specificity of the tRNA from methionine to isoleucine. This chain is tRNA(Ile)-lysidine synthase, found in Streptococcus pyogenes serotype M18 (strain MGAS8232).